Consider the following 212-residue polypeptide: ATP-dependent Clp protease proteolytic subunit (212 aa).

The Nucleophile role is filled by Ser-114. His-139 is a catalytic residue.

The protein belongs to the peptidase S14 family. In terms of assembly, fourteen ClpP subunits assemble into 2 heptameric rings which stack back to back to give a disk-like structure with a central cavity, resembling the structure of eukaryotic proteasomes.

The protein localises to the cytoplasm. It catalyses the reaction Hydrolysis of proteins to small peptides in the presence of ATP and magnesium. alpha-casein is the usual test substrate. In the absence of ATP, only oligopeptides shorter than five residues are hydrolyzed (such as succinyl-Leu-Tyr-|-NHMec, and Leu-Tyr-Leu-|-Tyr-Trp, in which cleavage of the -Tyr-|-Leu- and -Tyr-|-Trp bonds also occurs).. Its function is as follows. Cleaves peptides in various proteins in a process that requires ATP hydrolysis. Has a chymotrypsin-like activity. Plays a major role in the degradation of misfolded proteins. The sequence is that of ATP-dependent Clp protease proteolytic subunit from Aromatoleum aromaticum (strain DSM 19018 / LMG 30748 / EbN1) (Azoarcus sp. (strain EbN1)).